A 274-amino-acid chain; its full sequence is Orotidine 5'-phosphate decarboxylase (274 aa).

Residues Asp40, 62–64, 93–102, Tyr227, and Arg245 contribute to the substrate site; these read KTH and DRKFVDIGNT. The active-site Proton donor is the Lys95.

Belongs to the OMP decarboxylase family.

The enzyme catalyses orotidine 5'-phosphate + H(+) = UMP + CO2. The protein operates within pyrimidine metabolism; UMP biosynthesis via de novo pathway; UMP from orotate: step 2/2. The polypeptide is Orotidine 5'-phosphate decarboxylase (URA3) (Coccidioides posadasii (strain RMSCC 757 / Silveira) (Valley fever fungus)).